The sequence spans 332 residues: uncharacterized protein (332 aa).

Residues 27–47 (CAIVFLCVLLILPFLSCCTSL) traverse the membrane as a helical segment.

It is found in the membrane. This is an uncharacterized protein from Treponema pallidum (strain Nichols).